A 475-amino-acid chain; its full sequence is Aspartyl/glutamyl-tRNA(Asn/Gln) amidotransferase subunit B (475 aa).

This sequence belongs to the GatB/GatE family. GatB subfamily. Heterotrimer of A, B and C subunits.

It carries out the reaction L-glutamyl-tRNA(Gln) + L-glutamine + ATP + H2O = L-glutaminyl-tRNA(Gln) + L-glutamate + ADP + phosphate + H(+). The enzyme catalyses L-aspartyl-tRNA(Asn) + L-glutamine + ATP + H2O = L-asparaginyl-tRNA(Asn) + L-glutamate + ADP + phosphate + 2 H(+). In terms of biological role, allows the formation of correctly charged Asn-tRNA(Asn) or Gln-tRNA(Gln) through the transamidation of misacylated Asp-tRNA(Asn) or Glu-tRNA(Gln) in organisms which lack either or both of asparaginyl-tRNA or glutaminyl-tRNA synthetases. The reaction takes place in the presence of glutamine and ATP through an activated phospho-Asp-tRNA(Asn) or phospho-Glu-tRNA(Gln). The sequence is that of Aspartyl/glutamyl-tRNA(Asn/Gln) amidotransferase subunit B from Bacillus cereus (strain ZK / E33L).